Reading from the N-terminus, the 256-residue chain is Leucyl/phenylalanyl-tRNA--protein transferase (256 aa).

The segment at 1–21 is disordered; that stretch reads MIPWLPDDSDSAPFPPTRLAL.

Belongs to the L/F-transferase family.

It is found in the cytoplasm. It catalyses the reaction N-terminal L-lysyl-[protein] + L-leucyl-tRNA(Leu) = N-terminal L-leucyl-L-lysyl-[protein] + tRNA(Leu) + H(+). The catalysed reaction is N-terminal L-arginyl-[protein] + L-leucyl-tRNA(Leu) = N-terminal L-leucyl-L-arginyl-[protein] + tRNA(Leu) + H(+). It carries out the reaction L-phenylalanyl-tRNA(Phe) + an N-terminal L-alpha-aminoacyl-[protein] = an N-terminal L-phenylalanyl-L-alpha-aminoacyl-[protein] + tRNA(Phe). Functionally, functions in the N-end rule pathway of protein degradation where it conjugates Leu, Phe and, less efficiently, Met from aminoacyl-tRNAs to the N-termini of proteins containing an N-terminal arginine or lysine. This Leptothrix cholodnii (strain ATCC 51168 / LMG 8142 / SP-6) (Leptothrix discophora (strain SP-6)) protein is Leucyl/phenylalanyl-tRNA--protein transferase.